Here is a 93-residue protein sequence, read N- to C-terminus: HIG1 domain family member 1A, mitochondrial (93 aa).

N-acetylserine is present on S2. Positions 2–93 (STNTDLSLSS…YQEFWAKRKP (92 aa)) constitute an HIG1 domain. S8 is subject to Phosphoserine. The next 2 helical transmembrane spans lie at 28–48 (PFVP…LYKL) and 69–89 (GFVV…EFWA). Residues 90–93 (KRKP) are Mitochondrial matrix-facing.

In terms of assembly, associates with cytochrome c oxidase (COX, complex IV); proposed complex component. Also associates with respiratory chain supercomplexes. Expressed in brain and spinal cord.

Its subcellular location is the mitochondrion membrane. It localises to the mitochondrion inner membrane. Proposed subunit of cytochrome c oxidase (COX, complex IV), which is the terminal component of the mitochondrial respiratory chain that catalyzes the reduction of oxygen to water. May play a role in the assembly of respiratory supercomplexes. This is HIG1 domain family member 1A, mitochondrial (Higd1a) from Rattus norvegicus (Rat).